A 434-amino-acid chain; its full sequence is Maltotriose-binding protein (434 aa).

Residues 1–20 (MRRATYAFALLAILVLGVVA) form the signal peptide. The interval 28-52 (TTTPTQTSPATQPTTTQTPTQTETQ) is disordered. The span at 29–52 (TTPTQTSPATQPTTTQTPTQTETQ) shows a compositional bias: low complexity.

Belongs to the bacterial solute-binding protein 1 family.

Functionally, involved in an abc transport system for maltotriose. Binds maltotriose much more tightly than maltose. The polypeptide is Maltotriose-binding protein (malE) (Pyrococcus furiosus (strain ATCC 43587 / DSM 3638 / JCM 8422 / Vc1)).